The sequence spans 669 residues: DNA ligase (669 aa).

Residues 35–39, 84–85, and Glu114 contribute to the NAD(+) site; these read DSEYD and SL. The active-site N6-AMP-lysine intermediate is the Lys116. NAD(+)-binding residues include Arg137, Glu171, Lys287, and Lys311. Zn(2+)-binding residues include Cys405, Cys408, Cys423, and Cys428. The BRCT domain maps to 591 to 669; the sequence is DSDSYFAGKT…EAQLLGELKK (79 aa).

The protein belongs to the NAD-dependent DNA ligase family. LigA subfamily. It depends on Mg(2+) as a cofactor. The cofactor is Mn(2+).

It carries out the reaction NAD(+) + (deoxyribonucleotide)n-3'-hydroxyl + 5'-phospho-(deoxyribonucleotide)m = (deoxyribonucleotide)n+m + AMP + beta-nicotinamide D-nucleotide.. Its function is as follows. DNA ligase that catalyzes the formation of phosphodiester linkages between 5'-phosphoryl and 3'-hydroxyl groups in double-stranded DNA using NAD as a coenzyme and as the energy source for the reaction. It is essential for DNA replication and repair of damaged DNA. This Bacillus velezensis (strain DSM 23117 / BGSC 10A6 / LMG 26770 / FZB42) (Bacillus amyloliquefaciens subsp. plantarum) protein is DNA ligase.